A 304-amino-acid chain; its full sequence is Pyridoxal 5'-phosphate synthase subunit PdxS (304 aa).

Position 34 (Asp34) interacts with D-ribose 5-phosphate. The Schiff-base intermediate with D-ribose 5-phosphate role is filled by Lys91. Gly163 contacts D-ribose 5-phosphate. Arg175 serves as a coordination point for D-glyceraldehyde 3-phosphate. D-ribose 5-phosphate is bound by residues Gly224 and Gly245–Ser246.

The protein belongs to the PdxS/SNZ family. In the presence of PdxT, forms a dodecamer of heterodimers.

It catalyses the reaction aldehydo-D-ribose 5-phosphate + D-glyceraldehyde 3-phosphate + L-glutamine = pyridoxal 5'-phosphate + L-glutamate + phosphate + 3 H2O + H(+). The protein operates within cofactor biosynthesis; pyridoxal 5'-phosphate biosynthesis. Its function is as follows. Catalyzes the formation of pyridoxal 5'-phosphate from ribose 5-phosphate (RBP), glyceraldehyde 3-phosphate (G3P) and ammonia. The ammonia is provided by the PdxT subunit. Can also use ribulose 5-phosphate and dihydroxyacetone phosphate as substrates, resulting from enzyme-catalyzed isomerization of RBP and G3P, respectively. This Cutibacterium acnes (strain DSM 16379 / KPA171202) (Propionibacterium acnes) protein is Pyridoxal 5'-phosphate synthase subunit PdxS.